Here is a 316-residue protein sequence, read N- to C-terminus: Putative ubiquitin-conjugating enzyme E2 39 (316 aa).

In terms of domain architecture, UBC core spans 57–217 (NWVKDIQKEW…VFVFSLKTMH (161 aa)). Residue Cys-143 is the Glycyl thioester intermediate of the active site.

The protein belongs to the ubiquitin-conjugating enzyme family.

The catalysed reaction is S-ubiquitinyl-[E1 ubiquitin-activating enzyme]-L-cysteine + [E2 ubiquitin-conjugating enzyme]-L-cysteine = [E1 ubiquitin-activating enzyme]-L-cysteine + S-ubiquitinyl-[E2 ubiquitin-conjugating enzyme]-L-cysteine.. Its pathway is protein modification; protein ubiquitination. In terms of biological role, accepts the ubiquitin from the E1 complex and catalyzes its covalent attachment to other proteins. The polypeptide is Putative ubiquitin-conjugating enzyme E2 39 (UBC39) (Arabidopsis thaliana (Mouse-ear cress)).